A 240-amino-acid polypeptide reads, in one-letter code: MSPLLFGAGLVVLNLVTSARSQKTEPLSGSGDQPLFRGADRYDFAIMIPPGGTECFWQFAHQTGYFYFSYEVQRTVGMSHDRHVAATAHNPQGFLIDTSQGVRGQINFSTQETGFYQLCLSNQHNHFGSVQVYLNFGVFYEGPETDHKQKERKQLNDTLDAIEDGTQKVQNNIFHMWRYYNFARMRKMADFFLIQSNYNYVNWWSTAQSLVIILSGILQLYFLKRLFNVPTTTDTKKPRC.

Residues 1-21 (MSPLLFGAGLVVLNLVTSARS) form the signal peptide. The Lumenal segment spans residues 22–200 (QKTEPLSGSG…FFLIQSNYNY (179 aa)). The GOLD domain occupies 53–138 (TECFWQFAHQ…SVQVYLNFGV (86 aa)). 2 N-linked (GlcNAc...) asparagine glycosylation sites follow: N107 and N156. The helical transmembrane segment at 201–223 (VNWWSTAQSLVIILSGILQLYFL) threads the bilayer. Topologically, residues 224-240 (KRLFNVPTTTDTKKPRC) are cytoplasmic.

It belongs to the EMP24/GP25L family.

It localises to the endoplasmic reticulum membrane. This chain is Transmembrane emp24 domain-containing protein 6 (TMED6), found in Homo sapiens (Human).